The sequence spans 382 residues: Chaperone protein DnaJ (382 aa).

Positions 5–69 (DLYGVLGVAK…QKRANYDQSG (65 aa)) constitute a J domain. Residues 104–123 (QFFGGGGGQRNPNAPRPGRD) are disordered. The segment at 138–220 (GKKTKIKYNR…CGGSGHEEER (83 aa)) adopts a CR-type zinc-finger fold. Zn(2+) is bound by residues C151, C154, C168, C171, C194, C197, C208, and C211. 4 CXXCXGXG motif repeats span residues 151-158 (CHTCGGNG), 168-175 (CHQCGGSG), 194-201 (CPVCHGTG), and 208-215 (CPTCGGSG). The disordered stretch occupies residues 358–382 (ASGESVTGSGKGNLFNKMRDKFNEN).

Belongs to the DnaJ family. Homodimer. The cofactor is Zn(2+).

The protein localises to the cytoplasm. Participates actively in the response to hyperosmotic and heat shock by preventing the aggregation of stress-denatured proteins and by disaggregating proteins, also in an autonomous, DnaK-independent fashion. Unfolded proteins bind initially to DnaJ; upon interaction with the DnaJ-bound protein, DnaK hydrolyzes its bound ATP, resulting in the formation of a stable complex. GrpE releases ADP from DnaK; ATP binding to DnaK triggers the release of the substrate protein, thus completing the reaction cycle. Several rounds of ATP-dependent interactions between DnaJ, DnaK and GrpE are required for fully efficient folding. Also involved, together with DnaK and GrpE, in the DNA replication of plasmids through activation of initiation proteins. The protein is Chaperone protein DnaJ of Levilactobacillus brevis (strain ATCC 367 / BCRC 12310 / CIP 105137 / JCM 1170 / LMG 11437 / NCIMB 947 / NCTC 947) (Lactobacillus brevis).